The primary structure comprises 38 residues: Potassium channel toxin alpha-KTx 3.2 (38 aa).

Intrachain disulfides connect Cys-8–Cys-28, Cys-14–Cys-33, and Cys-18–Cys-35.

It belongs to the short scorpion toxin superfamily. Potassium channel inhibitor family. Alpha-KTx 03 subfamily. Expressed by the venom gland.

It localises to the secreted. In terms of biological role, potent inhibitor of the Shaker potassium channels and its mammalian homologs (Kv1.1/KCNA1, Kv1.3/KCNA3, Kv1.6/KCNA6) (Ki&lt;1 nM for all channels). Also blocks Kv1.2/KCNA2 (IC(50)=26.8 nM). It also shows a weak interaction with nicotinic acetylcholine receptors (nAChR), suggesting it may weakly inhibit it. The chain is Potassium channel toxin alpha-KTx 3.2 from Leiurus hebraeus (Hebrew deathstalker scorpion).